Consider the following 698-residue polypeptide: tRNA (guanine(37)-N(1))-methyltransferase (698 aa).

The tract at residues 233 to 254 (DSTAHDSVQRNEGKTPKGPLDG) is disordered. The span at 234–247 (STAHDSVQRNEGKT) shows a compositional bias: basic and acidic residues. S-adenosyl-L-methionine-binding positions include Arg394, 432–433 (DI), and 459–460 (DA). Disordered regions lie at residues 500 to 522 (PDQNNVDTGKRKKRESDRVGHVD) and 534 to 582 (KKKL…DAPR). Basic and acidic residues-rich tracts occupy residues 513–522 (RESDRVGHVD), 539–550 (HADTNDPLEERP), and 569–582 (TNNDSEKTKEDAPR). Asn603 serves as a coordination point for S-adenosyl-L-methionine.

It belongs to the class I-like SAM-binding methyltransferase superfamily. TRM5/TYW2 family. As to quaternary structure, monomer.

It localises to the mitochondrion matrix. Its subcellular location is the nucleus. The protein localises to the cytoplasm. It carries out the reaction guanosine(37) in tRNA + S-adenosyl-L-methionine = N(1)-methylguanosine(37) in tRNA + S-adenosyl-L-homocysteine + H(+). Functionally, specifically methylates the N1 position of guanosine-37 in various cytoplasmic and mitochondrial tRNAs. Methylation is not dependent on the nature of the nucleoside 5' of the target nucleoside. This is the first step in the biosynthesis of wybutosine (yW), a modified base adjacent to the anticodon of tRNAs and required for accurate decoding. This Plasmodium knowlesi (strain H) protein is tRNA (guanine(37)-N(1))-methyltransferase.